The chain runs to 333 residues: Syntaxin-4 (333 aa).

The Cytoplasmic segment spans residues 1–312; that stretch reads MGKDRLPELL…QHQKKARKKK (312 aa). Over residues 50–66 the composition is skewed to low complexity; it reads YSVVSQNSHSCSNNNSS. The disordered stretch occupies residues 50–81; it reads YSVVSQNSHSCSNNNSSTEPKDRSSSKMTQYG. Residues 91-116 are a coiled coil; sequence YTEIRQQLAQIAANLETMNRMAQTVN. A t-SNARE coiled-coil homology domain is found at 239–301; it reads LREMMDRFNE…DKGADELDQA (63 aa). A helical; Anchor for type IV membrane protein transmembrane segment spans residues 313 to 333; it reads IMLIVILAAVLLVLLLVGIYL.

Belongs to the syntaxin family.

The protein resides in the membrane. Potentially involved in docking of synaptic vesicles at presynaptic active zones. The protein is Syntaxin-4 of Drosophila melanogaster (Fruit fly).